Reading from the N-terminus, the 259-residue chain is 3-deoxy-manno-octulosonate cytidylyltransferase (259 aa).

The protein belongs to the KdsB family.

It is found in the cytoplasm. It catalyses the reaction 3-deoxy-alpha-D-manno-oct-2-ulosonate + CTP = CMP-3-deoxy-beta-D-manno-octulosonate + diphosphate. It functions in the pathway nucleotide-sugar biosynthesis; CMP-3-deoxy-D-manno-octulosonate biosynthesis; CMP-3-deoxy-D-manno-octulosonate from 3-deoxy-D-manno-octulosonate and CTP: step 1/1. It participates in bacterial outer membrane biogenesis; lipopolysaccharide biosynthesis. In terms of biological role, activates KDO (a required 8-carbon sugar) for incorporation into bacterial lipopolysaccharide in Gram-negative bacteria. The polypeptide is 3-deoxy-manno-octulosonate cytidylyltransferase (Protochlamydia amoebophila (strain UWE25)).